The sequence spans 917 residues: MIPLPVAAANSNSNSNSNSNDEESPNLSTVIKPPLKKTKTLLPPPSSSSSNRPLHLRVSIDNNNNNNAPPPPADFSDHQWNYPSFLGTTTRKRRPSSVKPPSTSNLRFDTIPKTKTKTKTNTNTNTNTNTNTNTNTDLPPPPVPSSSPVARPQHHNHRSPPIFYLLIITCIIFVPYSSYLQYKLAKLEDHKLHLCRQSQIHFSSGHGNGKISIPIHDASFSYILSRKAALYIVLFTLILPFLLYKYLDYLPQIINFLRRTHNNKEDVPLKKRIAYMLDVFFSIYPYAKLLALLFATLFLIGFGGLALYAVTGGSLAEALWHSWTYVADSGNHAETQGTGQRVVSVSISSGGMLIFAMMLGLVSDAISEKVDSLRKGKCEVIERNHILILGWSDKLGSLLKQLAIANKSVGGGVIVVLAEKEKEEMEMDITKLEFDFMGTSVICRSGSPLILADLKKVSVSKARAIIVLASDENADQSDARALRVVLSLTGVKEGLRGHVVVEMSDLDNEPLVKLVGGELIETVVAHDVIGRLMIQCALQPGLAQIWEDILGFENAEFYIKRWPELDGLSFKDILISFPDAIPCGVKVAADGGKIVINPDDSYVMRDGDEVLVIAEDDDTYSPGSLPEVLKGFFPRIPDAPKYPEKILFCGWRRDIDDMIMVLEAFLAPGSELWMFNEVPEKEREKKLAAGGLDVFGLENIKLVHREGNAVIRRHLESLPLETFDSILILADESVEDSVAHSDSRSLATLLLIRDIQSRRLPYKDTKSTSLRLSGFSHNSWIREMQQASDKSIIISEILDSRTRNLVSVSRISDYVLSNELVSMALAMVAEDKQINRVLEELFAEQGNEMCIKPAEFYLFDQEELCFYDIMIRGRARQEIIIGYRLANQERAIINPSEKLVARKWSLGDVFVVIASGD.

A disordered region spans residues 1-154 (MIPLPVAAAN…SSSPVARPQH (154 aa)). Low complexity predominate over residues 7-19 (AAANSNSNSNSNS). Residues 78-89 (HQWNYPSFLGTT) show a composition bias toward polar residues. Positions 119–136 (KTNTNTNTNTNTNTNTNT) are enriched in low complexity. Helical transmembrane passes span 160 to 180 (PPIFYLLIITCIIFVPYSSYL), 230 to 250 (LYIVLFTLILPFLLYKYLDYL), 290 to 310 (LALLFATLFLIGFGGLALYAV), and 342 to 362 (VVSVSISSGGMLIFAMMLGLV). RCK N-terminal domains lie at 383-524 (RNHI…ETVV) and 643-792 (PEKI…DKSI). Positions 413 to 435 (VIVVLAEKEKEEMEMDITKLEFD) form a coiled coil.

The protein belongs to the castor/pollux (TC 1.A.1.23) family. In terms of assembly, homooligomer. As to expression, mainly expressed in nodules. Also detected in infected and uninfected roots, leaves, seed pods, and flower buds.

It localises to the nucleus membrane. Its function is as follows. Ion channel with permeability for potassium. Involved in perinuclear calcium spiking but not in cytosolic calcium influx. Required for early signal transduction events leading to endosymbiosis. Acts early in a signal transduction chain leading from the perception of Nod factor to the activation of calcium spiking. Also involved in fungal entry into root epidermal cells during the establishment of the arbuscular mycorrhizal symbiosis. This chain is Ion channel POLLUX (POLLUX), found in Lotus japonicus (Lotus corniculatus var. japonicus).